The chain runs to 213 residues: Large ribosomal subunit protein uL18c (213 aa).

The protein belongs to the universal ribosomal protein uL18 family.

It is found in the plastid. Its subcellular location is the apicoplast. The polypeptide is Large ribosomal subunit protein uL18c (RPL18) (Plasmodium falciparum (isolate 3D7)).